A 131-amino-acid polypeptide reads, in one-letter code: MKKTGILNSDISRVVADMGHMDWLGIGDAGTPVPKTTEKIDLAVSAGMPSFISVLKEVLKELQVQKIYVADEIKDSNPKQLENIKRILPDVEIKFIPHTQLKKNLSEAKAFIRTGEETPFSNVILESGVIF.

His-20 serves as the catalytic Proton donor. Residues Asp-28, His-98, and 120 to 122 (FSN) each bind substrate.

It belongs to the RbsD / FucU family. RbsD subfamily. As to quaternary structure, homodecamer.

It localises to the cytoplasm. It carries out the reaction beta-D-ribopyranose = beta-D-ribofuranose. It participates in carbohydrate metabolism; D-ribose degradation; D-ribose 5-phosphate from beta-D-ribopyranose: step 1/2. Its function is as follows. Catalyzes the interconversion of beta-pyran and beta-furan forms of D-ribose. This Lactobacillus acidophilus (strain ATCC 700396 / NCK56 / N2 / NCFM) protein is D-ribose pyranase.